Reading from the N-terminus, the 156-residue chain is Small ribosomal subunit protein uS7 (156 aa).

This sequence belongs to the universal ribosomal protein uS7 family. In terms of assembly, part of the 30S ribosomal subunit. Contacts proteins S9 and S11.

In terms of biological role, one of the primary rRNA binding proteins, it binds directly to 16S rRNA where it nucleates assembly of the head domain of the 30S subunit. Is located at the subunit interface close to the decoding center, probably blocks exit of the E-site tRNA. This is Small ribosomal subunit protein uS7 from Latilactobacillus sakei subsp. sakei (strain 23K) (Lactobacillus sakei subsp. sakei).